Here is a 38-residue protein sequence, read N- to C-terminus: Trypsin inhibitor DE5 beta chain (38 aa).

Belongs to the protease inhibitor I3 (leguminous Kunitz-type inhibitor) family. Heterodimer of an alpha and a beta chain linked by a disulfide bond.

In terms of biological role, inhibition of trypsin. This Adenanthera pavonina (Sandal bead tree) protein is Trypsin inhibitor DE5 beta chain.